The chain runs to 1472 residues: Vacuolar cation-transporting ATPase YPK9 (1472 aa).

M1 carries the N-acetylmethionine modification. 2 stretches are compositionally biased toward polar residues: residues 1-12 (MDIPSSNQIQHG) and 72-87 (SFQSSNLPSPHSSGNL). Disordered regions lie at residues 1 to 32 (MDIPSSNQIQHGQRSERNRRMPRASFSSTATT), 71 to 115 (HSFQ…SRNP), and 179 to 273 (AKSY…DDVH). The Cytoplasmic portion of the chain corresponds to 1–293 (MDIPSSNQIQ…YHEKFYPQYA (293 aa)). Position 95 is a phosphothreonine (T95). Composition is skewed to low complexity over residues 103-115 (SSAEQSRSSSRNP) and 211-222 (SATHSSSSLSRY). Position 108 is a phosphoserine (S108). Residues 234–243 (SQTDEILEDE) are compositionally biased toward acidic residues. The chain crosses the membrane as a helical span at residues 294–315 (PNLHYQRFYIAEEDLVIGIAAY). The Vacuolar segment spans residues 316-321 (QTSKFW). A helical membrane pass occupies residues 322–344 (YIIYNLCCFLTFGLVYLLTRWLP). Topologically, residues 345–488 (HLKVKLYGVK…INLRMKTTSE (144 aa)) are cytoplasmic. Residues 489 to 511 (ILFNEVLHPFYVFQVFSIILWGI) form a helical membrane-spanning segment. Topologically, residues 512 to 514 (DEY) are vacuolar. A helical membrane pass occupies residues 515–533 (YYYAACIFLISVLSIFDSL). Over 534–693 (NEQKKVSRNL…PTGFKFYRDS (160 aa)) the chain is Cytoplasmic. The chain crosses the membrane as a helical span at residues 694 to 713 (FKYIGFMSLIAIFGFCVSCV). Residues 714–726 (QFIKLGLDKKTMI) lie on the Vacuolar side of the membrane. Residues 727 to 748 (LRALDIITIVVPPALPATLTIG) form a helical membrane-spanning segment. Residues 749 to 1244 (TNFALSRLKE…ALVTSFACFQ (496 aa)) lie on the Cytoplasmic side of the membrane. D781 serves as the catalytic 4-aspartylphosphate intermediate. 2 positions are modified to phosphoserine: S1117 and S1120. The Mg(2+) site is built by D1187 and D1191. A helical transmembrane segment spans residues 1245–1264 (YMSLYSAIQFITITILYSRG). Residues 1265-1271 (SNLGDFQ) lie on the Vacuolar side of the membrane. The chain crosses the membrane as a helical span at residues 1272-1289 (FLYIDLLLIVPIAICMSW). The Cytoplasmic portion of the chain corresponds to 1290–1307 (SKSYEKIDKKRPSANLVS). A helical membrane pass occupies residues 1308-1331 (PKILVPLLISVFLVFLFQFIPWII). The Vacuolar segment spans residues 1332 to 1351 (VQKMSWYIKPIVGGDDAVQS). A helical membrane pass occupies residues 1352–1374 (SDNTVLFFVSNFQYILTAIVLSV). The Cytoplasmic portion of the chain corresponds to 1375-1387 (GPPYREPMSKNFE). A helical transmembrane segment spans residues 1388 to 1407 (FIVDITVSIGASLLLMTLDT). The Vacuolar segment spans residues 1408–1423 (ESYLGKMLQLTPISNS). The helical transmembrane segment at 1424–1446 (FTMFIIVWVILNYYAQLYIPPSI) threads the bilayer. The Cytoplasmic portion of the chain corresponds to 1447 to 1472 (KGWLKKKKSSKKYKLLIQEEMKLKEV).

It belongs to the cation transport ATPase (P-type) (TC 3.A.3) family. Type V subfamily.

Its subcellular location is the vacuole membrane. The enzyme catalyses ATP + H2O = ADP + phosphate + H(+). Functionally, vacuolar transporter which plays a role in sequestration of divalent heavy metal ions. The sequence is that of Vacuolar cation-transporting ATPase YPK9 (YPK9) from Saccharomyces cerevisiae (strain ATCC 204508 / S288c) (Baker's yeast).